We begin with the raw amino-acid sequence, 447 residues long: DNA primase DnaG (447 aa).

One can recognise a Toprim domain in the interval 200-274; the sequence is DSIIVVEGRA…DIDYVARAPE (75 aa). Residues Glu-206, Asp-248, and Asp-250 each coordinate Mg(2+).

The protein belongs to the archaeal DnaG primase family. Forms a ternary complex with MCM helicase and DNA. Component of the archaeal exosome complex. It depends on Mg(2+) as a cofactor.

It catalyses the reaction ssDNA + n NTP = ssDNA/pppN(pN)n-1 hybrid + (n-1) diphosphate.. Functionally, RNA polymerase that catalyzes the synthesis of short RNA molecules used as primers for DNA polymerase during DNA replication. Also part of the exosome, which is a complex involved in RNA degradation. Acts as a poly(A)-binding protein that enhances the interaction between heteromeric, adenine-rich transcripts and the exosome. The sequence is that of DNA primase DnaG from Pyrococcus abyssi (strain GE5 / Orsay).